Consider the following 222-residue polypeptide: Kinetochore protein Spc25 (222 aa).

Residues 51–86 adopt a coiled-coil conformation; it reads RHQRKVGKLQKVLMERREELDKRVSFIEELDRELEA.

Belongs to the SPC25 family. As to quaternary structure, component of the Ndc80 complex, which is composed of Ndc80, Nuf2 and Spc25.

It is found in the nucleus. It localises to the chromosome. The protein resides in the centromere. The protein localises to the kinetochore. Functionally, acts as a component of the essential kinetochore-associated Ndc80 complex, which is required for chromosome segregation and spindle checkpoint activity during meiosis and mitosis. Required for kinetochore integrity and the organization of stable microtubule binding sites in the outer plate of the kinetochore. Participates in SAC signaling that responds specifically to disruptions in spindle microtubule dynamics. The NDC80 complex synergistically enhances the affinity of the SKA1 complex for microtubules and may allow the NDC80 complex to track depolymerizing microtubules. The chain is Kinetochore protein Spc25 from Drosophila melanogaster (Fruit fly).